The primary structure comprises 114 residues: Probable 4-amino-4-deoxy-L-arabinose-phosphoundecaprenol flippase subunit ArnE (114 aa).

The EamA domain maps to 39 to 112 (RSPWLWLALF…VIGGVALLGQ (74 aa)). A run of 3 helical transmembrane segments spans residues 41–61 (PWLW…LLVL), 64–84 (LPVS…TLIA), and 91–111 (PVDV…ALLG).

It belongs to the ArnE family. In terms of assembly, heterodimer of ArnE and ArnF.

Its subcellular location is the cell inner membrane. It participates in bacterial outer membrane biogenesis; lipopolysaccharide biosynthesis. Its function is as follows. Translocates 4-amino-4-deoxy-L-arabinose-phosphoundecaprenol (alpha-L-Ara4N-phosphoundecaprenol) from the cytoplasmic to the periplasmic side of the inner membrane. The chain is Probable 4-amino-4-deoxy-L-arabinose-phosphoundecaprenol flippase subunit ArnE from Pseudomonas fluorescens (strain Pf0-1).